The primary structure comprises 106 residues: Pyrimidine/purine nucleoside phosphorylase (106 aa).

This sequence belongs to the nucleoside phosphorylase PpnP family.

It carries out the reaction a purine D-ribonucleoside + phosphate = a purine nucleobase + alpha-D-ribose 1-phosphate. The enzyme catalyses adenosine + phosphate = alpha-D-ribose 1-phosphate + adenine. It catalyses the reaction cytidine + phosphate = cytosine + alpha-D-ribose 1-phosphate. The catalysed reaction is guanosine + phosphate = alpha-D-ribose 1-phosphate + guanine. It carries out the reaction inosine + phosphate = alpha-D-ribose 1-phosphate + hypoxanthine. The enzyme catalyses thymidine + phosphate = 2-deoxy-alpha-D-ribose 1-phosphate + thymine. It catalyses the reaction uridine + phosphate = alpha-D-ribose 1-phosphate + uracil. The catalysed reaction is xanthosine + phosphate = alpha-D-ribose 1-phosphate + xanthine. Functionally, catalyzes the phosphorolysis of diverse nucleosides, yielding D-ribose 1-phosphate and the respective free bases. Can use uridine, adenosine, guanosine, cytidine, thymidine, inosine and xanthosine as substrates. Also catalyzes the reverse reactions. The polypeptide is Pyrimidine/purine nucleoside phosphorylase (Burkholderia multivorans (strain ATCC 17616 / 249)).